We begin with the raw amino-acid sequence, 808 residues long: Probable E3 ubiquitin-protein ligase hulA (808 aa).

The C2 domain maps to 1–112; that stretch reads MGSNLPAQPN…QMGGDEMLTR (112 aa). Disordered stretches follow at residues 134-231 and 275-346; these read NLST…GWER and RRAH…YFVD. Composition is skewed to polar residues over residues 142 to 159 and 171 to 198; these read QANG…SSGL and GPSQ…PSST. Positions 199-210 are enriched in low complexity; the sequence is VAPVNGAAAPGA. The segment covering 211–220 has biased composition (polar residues); that stretch reads SRTNLSSFED. The region spanning 223–256 is the WW 1 domain; it reads GRLPAGWERREDNLGRTYYVDHNTRTTTWTRPSS. Over residues 275–288 the composition is skewed to basic and acidic residues; sequence RRAHQSRMLPEDRT. A compositionally biased stretch (polar residues) spans 289-303; the sequence is GASSPNLQENQQAQT. Residues 317 to 326 show a composition bias toward low complexity; it reads ATGATTAGTG. WW domains follow at residues 326-359 and 386-419; these read GELP…DPRR and GPLP…DPRL. Residues 475–808 enclose the HECT domain; sequence SASDLKKRLM…VEETLGFGQE (334 aa). The active-site Glycyl thioester intermediate is the Cys-776.

This sequence belongs to the RSP5/NEDD4 family. In terms of assembly, interacts with creD.

The protein localises to the cytoplasm. The catalysed reaction is S-ubiquitinyl-[E2 ubiquitin-conjugating enzyme]-L-cysteine + [acceptor protein]-L-lysine = [E2 ubiquitin-conjugating enzyme]-L-cysteine + N(6)-ubiquitinyl-[acceptor protein]-L-lysine.. The protein operates within protein modification; protein ubiquitination. Its function is as follows. E3 ubiquitin-protein ligase which accepts ubiquitin from an E2 ubiquitin-conjugating enzyme in the form of a thioester and then directly transfers the ubiquitin to targeted substrates. Probably involved in the regulatory network controlling carbon source utilization. The polypeptide is Probable E3 ubiquitin-protein ligase hulA (hulA) (Aspergillus terreus (strain NIH 2624 / FGSC A1156)).